The chain runs to 529 residues: Peptide chain release factor 3 (529 aa).

A tr-type G domain is found at Ser11 to Lys280. GTP contacts are provided by residues Ser20–Thr27, Asp88–His92, and Asn142–Asp145.

The protein belongs to the TRAFAC class translation factor GTPase superfamily. Classic translation factor GTPase family. PrfC subfamily.

The protein resides in the cytoplasm. In terms of biological role, increases the formation of ribosomal termination complexes and stimulates activities of RF-1 and RF-2. It binds guanine nucleotides and has strong preference for UGA stop codons. It may interact directly with the ribosome. The stimulation of RF-1 and RF-2 is significantly reduced by GTP and GDP, but not by GMP. This Vibrio campbellii (strain ATCC BAA-1116) protein is Peptide chain release factor 3.